A 97-amino-acid polypeptide reads, in one-letter code: Defensin-like protein 301 (97 aa).

Positions Met-1 to Gly-24 are cleaved as a signal peptide. 6 disulfide bridges follow: Cys-28/Cys-47, Cys-34/Cys-53, Cys-39/Cys-55, Cys-65/Cys-84, Cys-71/Cys-92, and Cys-76/Cys-94.

This sequence belongs to the DEFL family.

It localises to the secreted. The sequence is that of Defensin-like protein 301 from Arabidopsis thaliana (Mouse-ear cress).